The chain runs to 556 residues: Oxygen-dependent choline dehydrogenase (556 aa).

4-33 (DYIIIGAGSAGNVLATRLTEDPNTSVLLLE) is an FAD binding site. Histidine 473 functions as the Proton acceptor in the catalytic mechanism.

It belongs to the GMC oxidoreductase family. FAD is required as a cofactor.

The catalysed reaction is choline + A = betaine aldehyde + AH2. The enzyme catalyses betaine aldehyde + NAD(+) + H2O = glycine betaine + NADH + 2 H(+). It participates in amine and polyamine biosynthesis; betaine biosynthesis via choline pathway; betaine aldehyde from choline (cytochrome c reductase route): step 1/1. Functionally, involved in the biosynthesis of the osmoprotectant glycine betaine. Catalyzes the oxidation of choline to betaine aldehyde and betaine aldehyde to glycine betaine at the same rate. The sequence is that of Oxygen-dependent choline dehydrogenase from Escherichia coli O139:H28 (strain E24377A / ETEC).